The following is a 194-amino-acid chain: Mitochondrial import inner membrane translocase subunit Tim22 (194 aa).

2 cysteine pairs are disulfide-bonded: Cys-69/Cys-141 and Cys-160/Cys-179. 3 helical membrane-spanning segments follow: residues 74–94, 123–143, and 170–190; these read ALAC…TAGI, MSYA…ECLI, and AGLK…AAID.

The protein belongs to the Tim17/Tim22/Tim23 family. In terms of assembly, component of the TIM22 complex, whose core is composed of TIMM22, associated with peripheral protein FXC1/TIMM10B and the 70 kDa heterohexamer. In most cases, the 70 kDa complex is composed of TIMM9 and TIMM10 (TIMM10A or TIMM10B). A small fraction of the 70 kDa complex is composed of TIMM8 (TIMM8A/DDP1 or TIMM8B/DDP2) and TIMM13. The TIM22 complex also contains AGK and TIMM29. Interacts directly with TIMM9, TIMM10A and FXC1/TIMM10B. Interacts (when oxidized) with TIMM29; interaction is direct. In terms of processing, disulfide bonds promote efficient assembly of the TIM22 complex.

It localises to the mitochondrion inner membrane. Functionally, essential core component of the TIM22 complex, a complex that mediates the import and insertion of multi-pass transmembrane proteins into the mitochondrial inner membrane. In the TIM22 complex, it constitutes the voltage-activated and signal-gated channel. Forms a twin-pore translocase that uses the membrane potential as external driving force in 2 voltage-dependent steps. The protein is Mitochondrial import inner membrane translocase subunit Tim22 (TIMM22) of Homo sapiens (Human).